The sequence spans 305 residues: Probable 5-dehydro-4-deoxyglucarate dehydratase (305 aa).

Belongs to the DapA family.

It carries out the reaction 5-dehydro-4-deoxy-D-glucarate + H(+) = 2,5-dioxopentanoate + CO2 + H2O. The protein operates within carbohydrate acid metabolism; D-glucarate degradation; 2,5-dioxopentanoate from D-glucarate: step 2/2. The protein is Probable 5-dehydro-4-deoxyglucarate dehydratase of Pseudomonas entomophila (strain L48).